The following is a 226-amino-acid chain: Imidazole glycerol phosphate synthase subunit HisH (226 aa).

The Glutamine amidotransferase type-1 domain maps to 6 to 214 (NIALVDYGVG…VERAASRSAA (209 aa)). Cys84 serves as the catalytic Nucleophile. Residues His189 and Glu191 contribute to the active site.

In terms of assembly, heterodimer of HisH and HisF.

The protein localises to the cytoplasm. It catalyses the reaction 5-[(5-phospho-1-deoxy-D-ribulos-1-ylimino)methylamino]-1-(5-phospho-beta-D-ribosyl)imidazole-4-carboxamide + L-glutamine = D-erythro-1-(imidazol-4-yl)glycerol 3-phosphate + 5-amino-1-(5-phospho-beta-D-ribosyl)imidazole-4-carboxamide + L-glutamate + H(+). The enzyme catalyses L-glutamine + H2O = L-glutamate + NH4(+). The protein operates within amino-acid biosynthesis; L-histidine biosynthesis; L-histidine from 5-phospho-alpha-D-ribose 1-diphosphate: step 5/9. In terms of biological role, IGPS catalyzes the conversion of PRFAR and glutamine to IGP, AICAR and glutamate. The HisH subunit catalyzes the hydrolysis of glutamine to glutamate and ammonia as part of the synthesis of IGP and AICAR. The resulting ammonia molecule is channeled to the active site of HisF. This chain is Imidazole glycerol phosphate synthase subunit HisH, found in Gloeobacter violaceus (strain ATCC 29082 / PCC 7421).